Reading from the N-terminus, the 287-residue chain is Mitochondrial dicarboxylate carrier (287 aa).

3 Solcar repeats span residues 7–87 (SRWY…MRDY), 100–187 (NKVL…AKQL), and 196–279 (DNIF…LRKH). The next 3 membrane-spanning stretches (helical) occupy residues 9–29 (WYFGGLASCGAACCTHPLDLL), 62–81 (GLSASLCRQMTYSLTRFAIY), and 102–122 (VLLGGISGLTGGFVGTPADLV). Position 158 is an N6-acetyllysine (lysine 158). The next 3 membrane-spanning stretches (helical) occupy residues 162-181 (GATMASSRGALVTVGQLSCY), 202-222 (FVSSFIAGGCATFLCQPLDVL), and 254-274 (GLFPAGIRLIPHTVLTFMFLE).

This sequence belongs to the mitochondrial carrier (TC 2.A.29) family. Expressed at very high levels in white adipose tissue. And at low levels in brown adipose tissue, kidney and liver.

It is found in the mitochondrion inner membrane. The catalysed reaction is (S)-malate(in) + phosphate(out) = (S)-malate(out) + phosphate(in). The enzyme catalyses malonate(out) + (S)-malate(in) = malonate(in) + (S)-malate(out). It catalyses the reaction (S)-malate(in) + succinate(out) = (S)-malate(out) + succinate(in). It carries out the reaction (S)-malate(in) + sulfate(out) = (S)-malate(out) + sulfate(in). The catalysed reaction is malonate(out) + phosphate(in) = malonate(in) + phosphate(out). The enzyme catalyses succinate(out) + phosphate(in) = succinate(in) + phosphate(out). It catalyses the reaction sulfate(out) + phosphate(in) = sulfate(in) + phosphate(out). It carries out the reaction malonate(out) + succinate(in) = malonate(in) + succinate(out). With respect to regulation, regulated by circadian protein CLOCK (Circadian Locomotor Output Cycles Kaput). Functionally, catalyzes the electroneutral exchange or flux of physiologically important metabolites such as dicarboxylates (malonate, malate, succinate), inorganic sulfur-containing anions, and phosphate, across mitochondrial inner membrane. Plays an important role in gluconeogenesis, fatty acid metabolism, urea synthesis, and sulfur metabolism, particularly in liver, by supplying the substrates for the different metabolic processes. Regulates fatty acid release from adipocytes, and contributes to systemic insulin sensitivity. This chain is Mitochondrial dicarboxylate carrier, found in Mus musculus (Mouse).